We begin with the raw amino-acid sequence, 211 residues long: Holliday junction branch migration complex subunit RuvA (211 aa).

Residues 1–70 (MIQFLQGQVV…QDQIALFGFG (70 aa)) form a domain I region. The tract at residues 71-149 (RLAERDLFGQ…QWHKLQMGTG (79 aa)) is domain II. The flexible linker stretch occupies residues 150–158 (ETDSTLPTT). A domain III region spans residues 158–211 (TALLEDLEMTLLALGYTQTEIQQAIAMVSQVPDVAQSEDPEVWIRQAIGWLSDH).

The protein belongs to the RuvA family. As to quaternary structure, homotetramer. Forms an RuvA(8)-RuvB(12)-Holliday junction (HJ) complex. HJ DNA is sandwiched between 2 RuvA tetramers; dsDNA enters through RuvA and exits via RuvB. An RuvB hexamer assembles on each DNA strand where it exits the tetramer. Each RuvB hexamer is contacted by two RuvA subunits (via domain III) on 2 adjacent RuvB subunits; this complex drives branch migration. In the full resolvosome a probable DNA-RuvA(4)-RuvB(12)-RuvC(2) complex forms which resolves the HJ.

Its subcellular location is the cytoplasm. Its function is as follows. The RuvA-RuvB-RuvC complex processes Holliday junction (HJ) DNA during genetic recombination and DNA repair, while the RuvA-RuvB complex plays an important role in the rescue of blocked DNA replication forks via replication fork reversal (RFR). RuvA specifically binds to HJ cruciform DNA, conferring on it an open structure. The RuvB hexamer acts as an ATP-dependent pump, pulling dsDNA into and through the RuvAB complex. HJ branch migration allows RuvC to scan DNA until it finds its consensus sequence, where it cleaves and resolves the cruciform DNA. This Synechocystis sp. (strain ATCC 27184 / PCC 6803 / Kazusa) protein is Holliday junction branch migration complex subunit RuvA.